A 573-amino-acid polypeptide reads, in one-letter code: Dihydroxy-acid dehydratase (573 aa).

Cys62 is a binding site for [2Fe-2S] cluster. Asp94 serves as a coordination point for Mg(2+). A [2Fe-2S] cluster-binding site is contributed by Cys135. Mg(2+)-binding residues include Asp136 and Lys137. An N6-carboxylysine modification is found at Lys137. Cys212 contacts [2Fe-2S] cluster. Glu463 provides a ligand contact to Mg(2+). The active-site Proton acceptor is Ser489.

It belongs to the IlvD/Edd family. As to quaternary structure, homodimer. [2Fe-2S] cluster is required as a cofactor. Requires Mg(2+) as cofactor.

The enzyme catalyses (2R)-2,3-dihydroxy-3-methylbutanoate = 3-methyl-2-oxobutanoate + H2O. It catalyses the reaction (2R,3R)-2,3-dihydroxy-3-methylpentanoate = (S)-3-methyl-2-oxopentanoate + H2O. The protein operates within amino-acid biosynthesis; L-isoleucine biosynthesis; L-isoleucine from 2-oxobutanoate: step 3/4. Its pathway is amino-acid biosynthesis; L-valine biosynthesis; L-valine from pyruvate: step 3/4. Functions in the biosynthesis of branched-chain amino acids. Catalyzes the dehydration of (2R,3R)-2,3-dihydroxy-3-methylpentanoate (2,3-dihydroxy-3-methylvalerate) into 2-oxo-3-methylpentanoate (2-oxo-3-methylvalerate) and of (2R)-2,3-dihydroxy-3-methylbutanoate (2,3-dihydroxyisovalerate) into 2-oxo-3-methylbutanoate (2-oxoisovalerate), the penultimate precursor to L-isoleucine and L-valine, respectively. The chain is Dihydroxy-acid dehydratase from Arthrobacter sp. (strain FB24).